Consider the following 443-residue polypeptide: Chromosome partition protein MukF (443 aa).

Residues 209 to 237 (LDETSGNLRELQDTLNAAGDKLQAQLLRI) form a leucine-zipper region.

It belongs to the MukF family. Interacts, and probably forms a ternary complex, with MukE and MukB via its C-terminal region. The complex formation is stimulated by calcium or magnesium. It is required for an interaction between MukE and MukB.

It localises to the cytoplasm. The protein resides in the nucleoid. Involved in chromosome condensation, segregation and cell cycle progression. May participate in facilitating chromosome segregation by condensation DNA from both sides of a centrally located replisome during cell division. Not required for mini-F plasmid partitioning. Probably acts via its interaction with MukB and MukE. Overexpression results in anucleate cells. It has a calcium binding activity. This is Chromosome partition protein MukF from Actinobacillus pleuropneumoniae serotype 3 (strain JL03).